A 66-amino-acid chain; its full sequence is Large ribosomal subunit protein bL33c (66 aa).

The protein belongs to the bacterial ribosomal protein bL33 family.

The protein resides in the plastid. The protein localises to the chloroplast. The sequence is that of Large ribosomal subunit protein bL33c from Ipomoea purpurea (Common morning glory).